The primary structure comprises 350 residues: Glyoxylate reductase 1 (350 aa).

Threonine 31 is modified (phosphothreonine). NAD(+) is bound by residues 173 to 174, 252 to 254, and aspartate 278; these read RI and TAR. Arginine 254 is an active-site residue. The active site involves glutamate 283. Histidine 301 functions as the Proton donor in the catalytic mechanism. 301–304 contributes to the NAD(+) binding site; it reads HMGT.

Belongs to the D-isomer specific 2-hydroxyacid dehydrogenase family.

Its subcellular location is the cytoplasm. The protein resides in the nucleus. It localises to the mitochondrion. The enzyme catalyses glycolate + NAD(+) = glyoxylate + NADH + H(+). It carries out the reaction glycolate + NADP(+) = glyoxylate + NADPH + H(+). It catalyses the reaction (R)-glycerate + NAD(+) = 3-hydroxypyruvate + NADH + H(+). The catalysed reaction is (R)-glycerate + NADP(+) = 3-hydroxypyruvate + NADPH + H(+). Its function is as follows. Glyoxylate reductase that reversibly reduces glyoxylate to glycolate, or alternatively hydroxypyruvate to D-glycerate, using either NADPH or NADH as a cosubstrate. Does not act as a hydroxyisocaproate dehydrogenase even though it also has minor activity on alpha-ketoisocaproate. The chain is Glyoxylate reductase 1 from Saccharomyces cerevisiae (strain ATCC 204508 / S288c) (Baker's yeast).